The following is a 264-amino-acid chain: Thymidylate synthase (264 aa).

Arg21 is a dUMP binding site. Residue His51 participates in (6R)-5,10-methylene-5,6,7,8-tetrahydrofolate binding. 126–127 (RR) contacts dUMP. The active-site Nucleophile is the Cys146. Residues 166–169 (RSAD), Asn177, and 207–209 (HLY) each bind dUMP. Asp169 lines the (6R)-5,10-methylene-5,6,7,8-tetrahydrofolate pocket. Ala263 is a (6R)-5,10-methylene-5,6,7,8-tetrahydrofolate binding site.

This sequence belongs to the thymidylate synthase family. Bacterial-type ThyA subfamily. In terms of assembly, homodimer.

The protein localises to the cytoplasm. It catalyses the reaction dUMP + (6R)-5,10-methylene-5,6,7,8-tetrahydrofolate = 7,8-dihydrofolate + dTMP. It participates in pyrimidine metabolism; dTTP biosynthesis. In terms of biological role, catalyzes the reductive methylation of 2'-deoxyuridine-5'-monophosphate (dUMP) to 2'-deoxythymidine-5'-monophosphate (dTMP) while utilizing 5,10-methylenetetrahydrofolate (mTHF) as the methyl donor and reductant in the reaction, yielding dihydrofolate (DHF) as a by-product. This enzymatic reaction provides an intracellular de novo source of dTMP, an essential precursor for DNA biosynthesis. The polypeptide is Thymidylate synthase (Cytophaga hutchinsonii (strain ATCC 33406 / DSM 1761 / CIP 103989 / NBRC 15051 / NCIMB 9469 / D465)).